A 155-amino-acid polypeptide reads, in one-letter code: Phosphopantetheine adenylyltransferase (155 aa).

This sequence belongs to the eukaryotic CoaD family.

The protein localises to the cytoplasm. It carries out the reaction (R)-4'-phosphopantetheine + ATP + H(+) = 3'-dephospho-CoA + diphosphate. Its pathway is cofactor biosynthesis; coenzyme A biosynthesis. In terms of biological role, reversibly transfers an adenylyl group from ATP to 4'-phosphopantetheine, yielding dephospho-CoA (dPCoA) and pyrophosphate. The chain is Phosphopantetheine adenylyltransferase from Pyrobaculum aerophilum (strain ATCC 51768 / DSM 7523 / JCM 9630 / CIP 104966 / NBRC 100827 / IM2).